The sequence spans 127 residues: Small ribosomal subunit protein uS11 (127 aa).

This sequence belongs to the universal ribosomal protein uS11 family. In terms of assembly, part of the 30S ribosomal subunit. Interacts with proteins S7 and S18. Binds to IF-3.

Functionally, located on the platform of the 30S subunit, it bridges several disparate RNA helices of the 16S rRNA. Forms part of the Shine-Dalgarno cleft in the 70S ribosome. The chain is Small ribosomal subunit protein uS11 from Rickettsia bellii (strain RML369-C).